Consider the following 398-residue polypeptide: Bombesin receptor subtype-3 (398 aa).

At 1-40 the chain is on the extracellular side; that stretch reads MAQRQPHSPNQTLISITNDTESSSVVSNDNTNKGRSGDNS. Residues asparagine 10 and asparagine 18 are each glycosylated (N-linked (GlcNAc...) asparagine). The helical transmembrane segment at 41–62 threads the bilayer; the sequence is PGIEALCAIYITYAVIISVGIL. Topologically, residues 63–81 are cytoplasmic; it reads GNAILIKVFFKTKSMQTVP. Residues 82 to 102 form a helical membrane-spanning segment; sequence NIFITSLAFGDLLLLLTCVPV. The Extracellular segment spans residues 103 to 120; sequence DATHYLAEGWLFGRIGCK. Residues cysteine 119 and cysteine 202 are joined by a disulfide bond. A helical transmembrane segment spans residues 121-142; it reads VLSFIRLTSVGVSVFTLTILSA. Over 143–162 the chain is Cytoplasmic; sequence DRYKAVVKPLERQPSNAILK. Residues 163 to 183 traverse the membrane as a helical segment; sequence TCIKAGCVWIVSMIFALPEAI. The Extracellular portion of the chain corresponds to 184–219; that stretch reads FSNVYSFRDPNKNVTFESCTSYPVSKKLLQEIHSLL. A helical membrane pass occupies residues 220–240; the sequence is CFLVFYIIPLSIISVYYSLIA. Topologically, residues 241–271 are cytoplasmic; it reads RTLYKSTLNIPTEEQGHARKQIESRKRIART. The helical transmembrane segment at 272–292 threads the bilayer; sequence VLVLVALFALCWLPNHLLYLY. The Extracellular segment spans residues 293–312; it reads HSFTSQTYVDPSAMHFIFTI. The helical transmembrane segment at 313–332 threads the bilayer; it reads FSRVLAFSNSCVNPFALYWL. At 333–398 the chain is on the cytoplasmic side; it reads SKTFQKHFKA…CSVKQAEDRV (66 aa). The S-palmitoyl cysteine moiety is linked to residue cysteine 346.

This sequence belongs to the G-protein coupled receptor 1 family. As to quaternary structure, interacts with C6orf89.

The protein resides in the cell membrane. In terms of biological role, role in sperm cell division, maturation, or function. This receptor mediates its action by association with G proteins that activate a phosphatidylinositol-calcium second messenger system. This chain is Bombesin receptor subtype-3 (BRS3), found in Macaca mulatta (Rhesus macaque).